A 391-amino-acid chain; its full sequence is Galactokinase (391 aa).

Position 34 to 37 (34 to 37 (EHTD)) interacts with substrate. Residue 121-127 (GAGLSSS) participates in ATP binding. Mg(2+)-binding residues include S127 and E159. Catalysis depends on D171, which acts as the Proton acceptor. Y220 lines the substrate pocket.

Belongs to the GHMP kinase family. GalK subfamily.

It localises to the cytoplasm. The enzyme catalyses alpha-D-galactose + ATP = alpha-D-galactose 1-phosphate + ADP + H(+). The protein operates within carbohydrate metabolism; galactose metabolism. Catalyzes the transfer of the gamma-phosphate of ATP to D-galactose to form alpha-D-galactose-1-phosphate (Gal-1-P). This Roseiflexus sp. (strain RS-1) protein is Galactokinase.